Consider the following 567-residue polypeptide: Glutamate--tRNA ligase (567 aa).

Residues 106-116 carry the 'HIGH' region motif; that stretch reads PNPDGPLHLGN.

It belongs to the class-I aminoacyl-tRNA synthetase family. Glutamate--tRNA ligase type 2 subfamily.

The protein resides in the cytoplasm. The enzyme catalyses tRNA(Glu) + L-glutamate + ATP = L-glutamyl-tRNA(Glu) + AMP + diphosphate. Its function is as follows. Catalyzes the attachment of glutamate to tRNA(Glu) in a two-step reaction: glutamate is first activated by ATP to form Glu-AMP and then transferred to the acceptor end of tRNA(Glu). The protein is Glutamate--tRNA ligase of Sulfolobus acidocaldarius (strain ATCC 33909 / DSM 639 / JCM 8929 / NBRC 15157 / NCIMB 11770).